The chain runs to 605 residues: Pescadillo homolog (605 aa).

Residues 51–484 (KANKGSTAPT…GEEEESESES (434 aa)) are sufficient for interaction with ERB1. Ser288 carries the post-translational modification Phosphoserine. Residues 294 to 342 (LKSALNADEANTDETEKEEEQEKKQEKEQEKEQNEETELDTFEDNNKNK) adopt a coiled-coil conformation. The disordered stretch occupies residues 297–342 (ALNADEANTDETEKEEEQEKKQEKEQEKEQNEETELDTFEDNNKNK). Acidic residues predominate over residues 303-312 (ANTDETEKEE). Thr308 carries the phosphothreonine modification. The segment covering 313–327 (EQEKKQEKEQEKEQN) has biased composition (basic and acidic residues). The BRCT domain occupies 355-449 (PVASLFSAFV…ELVPANKYLP (95 aa)). Positions 459–605 (PWGDAIGYDP…AKLNKLDSKK (147 aa)) are disordered. Residues 473 to 510 (EEGEEEESESESESEDQVEEEDQEVVAGEEDDDDDEEL) show a composition bias toward acidic residues. A coiled-coil region spans residues 530 to 605 (EADKDVNKSK…AKLNKLDSKK (76 aa)). Positions 562–571 (KQKKLYKKMK) are enriched in basic residues. Positions 575-584 (AKKEEQAENL) are enriched in basic and acidic residues. Basic residues predominate over residues 585-598 (KKKKKQIAKQKAKL).

Belongs to the pescadillo family. As to quaternary structure, component of the NOP7 complex, composed of ERB1, NOP7 and YTM1. The complex is held together by ERB1, which interacts with NOP7 via its N-terminal domain and with YTM1 via a high-affinity interaction between the seven-bladed beta-propeller domains of the 2 proteins. The NOP7 complex associates with the 66S pre-ribosome.

The protein resides in the nucleus. It localises to the nucleolus. Its subcellular location is the nucleoplasm. In terms of biological role, component of the NOP7 complex, which is required for maturation of the 25S and 5.8S ribosomal RNAs and formation of the 60S ribosome. This is Pescadillo homolog from Saccharomyces cerevisiae (strain YJM789) (Baker's yeast).